Reading from the N-terminus, the 262-residue chain is Tethering factor for nuclear proteasome cut8 (262 aa).

It belongs to the cut8/STS1 family. Binds the proteasome. Post-translationally, the N-terminal part (residues 1 to 72) is polyubiquitinated by rhp6, which is required for the interaction with the proteasome.

It localises to the nucleus envelope. Functionally, together with nucleoporin alm1, tethers the proteasome to the nuclear envelope. Involved in ubiquitin-mediated protein degradation and facilitates the degradation of nuclear proteins like mitotic cyclin and cut2. Required for normal progression of anaphase. This Schizosaccharomyces pombe (strain 972 / ATCC 24843) (Fission yeast) protein is Tethering factor for nuclear proteasome cut8.